Here is a 110-residue protein sequence, read N- to C-terminus: Phosphoribosyl-ATP pyrophosphatase (110 aa).

This sequence belongs to the PRA-PH family.

The protein resides in the cytoplasm. It catalyses the reaction 1-(5-phospho-beta-D-ribosyl)-ATP + H2O = 1-(5-phospho-beta-D-ribosyl)-5'-AMP + diphosphate + H(+). The protein operates within amino-acid biosynthesis; L-histidine biosynthesis; L-histidine from 5-phospho-alpha-D-ribose 1-diphosphate: step 2/9. The protein is Phosphoribosyl-ATP pyrophosphatase of Clostridium novyi (strain NT).